The following is a 430-amino-acid chain: Septin-14 (430 aa).

A Septin-type G domain is found at 48–313 (KGFSFNILCV…ECYRSNRLQK (266 aa)). The G1 motif stretch occupies residues 58-65 (GETGIGKT). GTP-binding positions include 58–65 (GETGIGKT), Gly-113, 194–202 (KADSLSKND), Gly-246, and Arg-261. The tract at residues 110 to 113 (KTVG) is G3 motif. A G4 motif region spans residues 193-196 (AKAD). The stretch at 329 to 410 (QEMYEAKRRE…IIDFYKMKAA (82 aa)) forms a coiled coil. Residues 367 to 430 (DAEKELQDKF…NIKKDKDRKK (64 aa)) form a required for interaction with SEPTIN4. Required for migration of cortical neurons during corticogenesis region.

Belongs to the TRAFAC class TrmE-Era-EngA-EngB-Septin-like GTPase superfamily. Septin GTPase family. Septins polymerize into heterooligomeric protein complexes that form filaments, and can associate with cellular membranes, actin filaments and microtubules. GTPase activity is required for filament formation. Interacts with ACTN4. Interacts with SEPTIN9. Interacts (via C-terminus) with SEPTIN4. As to expression, expressed in the testis and brain including the cerebrum, hippocampus and cerebellum (at protein level).

Its subcellular location is the cytoplasm. The protein resides in the cytoskeleton. It is found in the cell projection. The protein localises to the axon. It localises to the dendrite. Its subcellular location is the perikaryon. The protein resides in the perinuclear region. It is found in the cytoplasmic vesicle. The protein localises to the secretory vesicle. It localises to the acrosome. Functionally, filament-forming cytoskeletal GTPase. Involved in the migration of cortical neurons and the formation of neuron leading processes during embryonic development. Plays a role in sperm head formation during spermiogenesis, potentially via facilitating localization of ACTN4 to cell filaments. This is Septin-14 from Mus musculus (Mouse).